Reading from the N-terminus, the 481-residue chain is Cardiolipin synthase A (481 aa).

Transmembrane regions (helical) follow at residues 10–30 and 40–60; these read FFGY…LHAL and IAWA…YLIF. 2 PLD phosphodiesterase domains span residues 220-247 and 394-421; these read VNFR…GDEY and QPGF…DNRS. Residues histidine 225, lysine 227, aspartate 232, histidine 399, lysine 401, and aspartate 406 contribute to the active site.

Belongs to the phospholipase D family. Cardiolipin synthase subfamily. ClsA sub-subfamily.

The protein localises to the cell inner membrane. The catalysed reaction is 2 a 1,2-diacyl-sn-glycero-3-phospho-(1'-sn-glycerol) = a cardiolipin + glycerol. Its function is as follows. Catalyzes the reversible phosphatidyl group transfer from one phosphatidylglycerol molecule to another to form cardiolipin (CL) (diphosphatidylglycerol) and glycerol. This chain is Cardiolipin synthase A, found in Pseudomonas putida (strain ATCC 47054 / DSM 6125 / CFBP 8728 / NCIMB 11950 / KT2440).